Reading from the N-terminus, the 244-residue chain is 27 kDa core protein (244 aa).

It belongs to the chordopoxvirinae D3 family.

Its subcellular location is the virion. Late protein which is part of a large complex required for early virion morphogenesis. This complex participates in the formation of virosomes and the incorporation of virosomal contents into nascent immature virions. This chain is 27 kDa core protein, found in Swinepox virus (strain Swine/Nebraska/17077-99/1999) (SWPV).